The chain runs to 341 residues: Methionine import ATP-binding protein MetN 3 (341 aa).

The ABC transporter domain occupies 2-241 (IEFQNVTKTF…PSHETTKRFI (240 aa)). 38 to 45 (GFSGAGKS) serves as a coordination point for ATP.

The protein belongs to the ABC transporter superfamily. Methionine importer (TC 3.A.1.24) family. The complex is composed of two ATP-binding proteins (MetN), two transmembrane proteins (MetI) and a solute-binding protein (MetQ).

The protein localises to the cell membrane. It carries out the reaction L-methionine(out) + ATP + H2O = L-methionine(in) + ADP + phosphate + H(+). It catalyses the reaction D-methionine(out) + ATP + H2O = D-methionine(in) + ADP + phosphate + H(+). Functionally, part of the ABC transporter complex MetNIQ involved in methionine import. Responsible for energy coupling to the transport system. This Oceanobacillus iheyensis (strain DSM 14371 / CIP 107618 / JCM 11309 / KCTC 3954 / HTE831) protein is Methionine import ATP-binding protein MetN 3.